The primary structure comprises 470 residues: 3-isopropylmalate dehydratase large subunit (470 aa).

Residues Cys351, Cys411, and Cys414 each coordinate [4Fe-4S] cluster.

This sequence belongs to the aconitase/IPM isomerase family. LeuC type 1 subfamily. Heterodimer of LeuC and LeuD. Requires [4Fe-4S] cluster as cofactor.

The enzyme catalyses (2R,3S)-3-isopropylmalate = (2S)-2-isopropylmalate. It participates in amino-acid biosynthesis; L-leucine biosynthesis; L-leucine from 3-methyl-2-oxobutanoate: step 2/4. Its function is as follows. Catalyzes the isomerization between 2-isopropylmalate and 3-isopropylmalate, via the formation of 2-isopropylmaleate. This is 3-isopropylmalate dehydratase large subunit from Shewanella frigidimarina (strain NCIMB 400).